Here is a 317-residue protein sequence, read N- to C-terminus: Melanocyte-stimulating hormone receptor (317 aa).

The Extracellular portion of the chain corresponds to 1-37; it reads MPVQGSQRRLLGSLNSTPTATPKLGLAANQTGAWCLE. N-linked (GlcNAc...) asparagine glycosylation is present at Asn-29. A helical transmembrane segment spans residues 38–63; that stretch reads VSIPDGLFLSLGLVSLVENVLVVAAI. The Cytoplasmic segment spans residues 64-72; the sequence is AKNRNLHSP. Residues 73–93 traverse the membrane as a helical segment; the sequence is MYCFICCLALSDLLVSGSNML. Residues 94–118 are Extracellular-facing; it reads ETAVILLLEAGALAARAAVVQQLDN. The helical transmembrane segment at 119–140 threads the bilayer; the sequence is VIDVITCSSMLSSLCFLGAIAV. Residues 141–163 are Cytoplasmic-facing; that stretch reads DRYISIFYALRYHSIVTLPRAQR. Residues 164–183 form a helical membrane-spanning segment; it reads VVAAIWVASVLFSTLFIAYY. At 184-191 the chain is on the extracellular side; sequence DHAAVLLC. A helical membrane pass occupies residues 192–211; the sequence is LVVFFLAMLVLMAVLYVHML. The Cytoplasmic portion of the chain corresponds to 212–240; that stretch reads ARACQHAQGIAQLHKRQRPAHQGFGLKGA. A helical membrane pass occupies residues 241–266; sequence ATLTILLGIFFLCWGPFFLHLTLIVL. Residues 267-279 lie on the Extracellular side of the membrane; the sequence is CPQHPTCSCIFKN. A helical membrane pass occupies residues 280 to 300; the sequence is FNLFLALIICNAIIDPLIYAF. The Cytoplasmic segment spans residues 301 to 317; it reads RSQELRRTLKEVLLCSW. Cys-315 carries S-palmitoyl cysteine lipidation.

Belongs to the G-protein coupled receptor 1 family. In terms of assembly, interacts with MGRN1, but does not undergo MGRN1-mediated ubiquitination; this interaction competes with GNAS-binding and thus inhibits agonist-induced cAMP production. Interacts with OPN3; the interaction results in a decrease in MC1R-mediated cAMP signaling and ultimately a decrease in melanin production in melanocytes.

It localises to the cell membrane. Its function is as follows. Receptor for MSH (alpha, beta and gamma) and ACTH. The activity of this receptor is mediated by G proteins which activate adenylate cyclase. Mediates melanogenesis, the production of eumelanin (black/brown) and phaeomelanin (red/yellow), via regulation of cAMP signaling in melanocytes. The polypeptide is Melanocyte-stimulating hormone receptor (MC1R) (Colobus guereza (Mantled guereza)).